The following is a 996-amino-acid chain: Filament-like plant protein 5 (996 aa).

The interval 1 to 20 is disordered; the sequence is MEGRGWPWKRKSSDKATTEK. Coiled coils occupy residues 59 to 94, 133 to 248, 280 to 301, and 359 to 387; these read THMS…TKES, TAED…KYDL, VKKI…RKKL, and LTRR…LQVS. 2 disordered regions span residues 409–482 and 496–534; these read NNDK…SSSR and VGSD…DEDT. Low complexity predominate over residues 417 to 428; that stretch reads SNSRNLSESLSS. Positions 471–482 are enriched in polar residues; it reads VNGSSKPRSSSR. Positions 503 to 527 are enriched in low complexity; it reads ANSASKSSNSVCSRRSVEKQSSSKS. 3 coiled-coil regions span residues 601–622, 737–841, and 876–906; these read QNSE…VANI, DSSC…FTTE, and NQEK…QSLQ. The interval 962–996 is disordered; that stretch reads IMKSSSVSSSSKEDNEKHTRGLGRFFSSKSKNSAR.

This sequence belongs to the FPP family. Interacts with WPP/MAF proteins.

This is Filament-like plant protein 5 (FPP5) from Arabidopsis thaliana (Mouse-ear cress).